Reading from the N-terminus, the 145-residue chain is MGVYSPAPRTPRGPWNIRIRFLSWSNSFLLEVKKNYGDVYLCDVCPVRPPGLQAPREQPVLHDRKVLHLYGQDSGVRDVQEVLWNPVSHQEVRRDNHGVLHGRRRARVRQAEEGRRRRQEGHRFRDWERLHQRVEGCPGLQGHGF.

This is an uncharacterized protein from Frog virus 3 (isolate Goorha) (FV-3).